The sequence spans 544 residues: MERKHMSALSIYQSLSGGKTPQAEDKAPPAKKVKRKENGVRPSKKATKKKGTKPLKSSVRSSSSEKEKHEGERDCREMNGKRFDNVALDILLTDLAKVNNSRDRANRLFQWLIHPVQDKSFFRDNWEKKPILIQRQNADYYKGLFSTAEFDRILRNDDVQYGVNLDVTSYTNGKRETHNPPGRALPYTVWDFYESGCSIRMLNPQAFSSTVWQVLSVLQEKFGSMAGANVYLTPPGTQGFAPHFDDIEAFVVQLEGRKHWRVYNPRCEDEVLSLVSSPNFSQDEIGEPVMDVVLEAGDLLYFPRGFVHQGDCLPDAHSLHITISSYQRNSWGDLMLKLMPAALEVAMEEDVEFRKGLPLDYLQYMGVQNSEKEDPRRDRFMAHIQGLMKKLVSFAPVDAAVDQKAKDFLHDCLPPLLTAEEKAGSVYGAPARWGDSEALDVAVELKSQTRIKLVRAGAARLCSDGDTVHLYYTTENSRVYHKEASKSFEMKTEHIDAMEFLIHSYPKFVSVASLPCETAEAKMSLAELLFEKGLIFTAEPLTAQ.

Positions Met1–Met78 are disordered. A compositionally biased stretch (polar residues) spans Ser10–Lys19. Over residues Pro42–Lys53 the composition is skewed to basic residues. Residues Ser63–Met78 show a composition bias toward basic and acidic residues. The JmjC domain occupies Cys197–Ala342. 3 residues coordinate Fe cation: His243, Asp245, and His308.

It belongs to the ROX family. NO66 subfamily. Fe(2+) is required as a cofactor.

It localises to the nucleus. Its subcellular location is the nucleolus. It is found in the nucleoplasm. The enzyme catalyses N(6),N(6)-dimethyl-L-lysyl(36)-[histone H3] + 2 2-oxoglutarate + 2 O2 = L-lysyl(36)-[histone H3] + 2 formaldehyde + 2 succinate + 2 CO2. The catalysed reaction is N(6)-methyl-L-lysyl-[protein] + 2-oxoglutarate + O2 = L-lysyl-[protein] + formaldehyde + succinate + CO2. It catalyses the reaction L-histidyl-[protein] + 2-oxoglutarate + O2 = (3S)-3-hydroxy-L-histidyl-[protein] + succinate + CO2. Its function is as follows. Oxygenase that can act as both a histone lysine demethylase and a ribosomal histidine hydroxylase. Specifically demethylates 'Lys-4' (H3K4me) and 'Lys-36' (H3K36me) of histone H3, thereby playing a central role in histone code. Preferentially demethylates trimethylated H3 'Lys-4' (H3K4me3) and monomethylated H3 'Lys-4' (H3K4me1) residues, while it has weaker activity for dimethylated H3 'Lys-36' (H3K36me2). Also catalyzes demethylation of non-histone proteins. Also catalyzes the hydroxylation of 60S ribosomal protein L8 on 'His-216', thereby playing a role in ribosome biogenesis. In Danio rerio (Zebrafish), this protein is Ribosomal oxygenase 1 (riox1).